The following is a 624-amino-acid chain: DNA-directed RNA polymerase III subunit rpc-3 (624 aa).

2 disordered regions span residues 229–260 (KRKL…EEDL) and 373–418 (LAPK…ARMS). Residues 385-403 (DDSDDDEEDGDYSDSDEEM) are compositionally biased toward acidic residues. The interval 551-572 (CYATMVHCLQVLEVRRQKDKDV) is leucine-zipper.

It belongs to the RNA polymerase beta chain family. As to quaternary structure, component of the RNA polymerase III (Pol III) complex consisting of 17 subunits.

Its subcellular location is the nucleus. In terms of biological role, DNA-dependent RNA polymerase catalyzes the transcription of DNA into RNA using the four ribonucleoside triphosphates as substrates. Specific core component of RNA polymerase III which synthesizes small RNAs, such as 5S rRNA and tRNAs. This Neurospora crassa (strain ATCC 24698 / 74-OR23-1A / CBS 708.71 / DSM 1257 / FGSC 987) protein is DNA-directed RNA polymerase III subunit rpc-3 (rpc-82).